The chain runs to 302 residues: Sulfate adenylyltransferase subunit 2 (302 aa).

Belongs to the PAPS reductase family. CysD subfamily. In terms of assembly, heterodimer composed of CysD, the smaller subunit, and CysN.

It carries out the reaction sulfate + ATP + H(+) = adenosine 5'-phosphosulfate + diphosphate. Its pathway is sulfur metabolism; hydrogen sulfide biosynthesis; sulfite from sulfate: step 1/3. Functionally, with CysN forms the ATP sulfurylase (ATPS) that catalyzes the adenylation of sulfate producing adenosine 5'-phosphosulfate (APS) and diphosphate, the first enzymatic step in sulfur assimilation pathway. APS synthesis involves the formation of a high-energy phosphoric-sulfuric acid anhydride bond driven by GTP hydrolysis by CysN coupled to ATP hydrolysis by CysD. In Enterobacter sp. (strain 638), this protein is Sulfate adenylyltransferase subunit 2.